A 326-amino-acid chain; its full sequence is Eukaryotic translation initiation factor 3 subunit I (326 aa).

5 WD repeats span residues 8–47 (GHERSITQIKYNREGDLLFSCSKDQKPNVWYSLNGERLGT), 50–89 (GHQGAVWCLDVDWESRKLITGAGDMTTKIWDVEYGTVIAS), 145–184 (MTESKITSMLWGPLDETIITGHDNGNIAIWDIRKGQKVVD), 188–227 (DHSAGINDMQLSKDGTMFVTASKDTTAKLFDSESLMCLKT), and 285–326 (GHFG…NIFE).

This sequence belongs to the eIF-3 subunit I family. As to quaternary structure, component of the eukaryotic translation initiation factor 3 (eIF-3) complex. The eIF-3 complex interacts with pix.

Its subcellular location is the cytoplasm. In terms of biological role, component of the eukaryotic translation initiation factor 3 (eIF-3) complex, which is involved in protein synthesis of a specialized repertoire of mRNAs and, together with other initiation factors, stimulates binding of mRNA and methionyl-tRNAi to the 40S ribosome. The eIF-3 complex specifically targets and initiates translation of a subset of mRNAs involved in cell proliferation. The sequence is that of Eukaryotic translation initiation factor 3 subunit I from Drosophila erecta (Fruit fly).